Here is a 559-residue protein sequence, read N- to C-terminus: PHD finger protein 1 (559 aa).

The region spanning 29–86 (PRLWEGQDVLARWTDGLLYLGTIKKVDSAREVCLVQFEDDSQFLVLWKDISPAALPGE) is the Tudor domain. 2 consecutive PHD-type zinc fingers follow at residues 87-142 (ELLC…CVFA) and 186-240 (QSYC…CRGG). 2 disordered regions span residues 338–434 (PVEL…TDAR) and 448–526 (HPSA…GGVS). Residues 369 to 386 (WRSEPEPLRRRQKGKVEE) show a composition bias toward basic and acidic residues. Composition is skewed to polar residues over residues 417 to 426 (NQSYEGSSGY) and 449 to 459 (PSASTAGTSGD). Low complexity predominate over residues 481–515 (SSPHSVTASSSSVPALTPGFSRHSPPSPLCRSLSP).

The protein belongs to the Polycomblike family. Associated component of the PRC2 complex. Interacts with p53/TP53. Interacts with CHMP1. Testis-specific.

The protein resides in the nucleus. Its subcellular location is the cytoplasm. It is found in the cytoskeleton. The protein localises to the microtubule organizing center. It localises to the centrosome. Its function is as follows. Polycomb group (PcG) that specifically binds histone H3 trimethylated at 'Lys-36' (H3K36me3) and recruits the PRC2 complex. Involved in DNA damage response and is recruited at double-strand breaks (DSBs). Acts by binding to H3K36me3, a mark for transcriptional activation, and recruiting the PRC2 complex: it is however unclear whether recruitment of the PRC2 complex to H3K36me3 leads to enhance or inhibit H3K27me3 methylation mediated by the PRC2 complex. According to some reports, PRC2 recruitment by PHF1 promotes H3K27me3 and subsequent gene silencing by inducing spreading of PRC2 and H3K27me3 into H3K36me3 loci. According to other reports, PHF1 recruits the PRC2 complex at double-strand breaks (DSBs) and inhibits the activity of PRC2. Regulates p53/TP53 stability and prolonges its turnover: may act by specifically binding to a methylated from of p53/TP53. This is PHD finger protein 1 (Phf1) from Mus musculus (Mouse).